Reading from the N-terminus, the 641-residue chain is MSKIIGIDLGTTNSCIALLDGDKPRVIENAEGERTTASVIAYTQDGEILVGQPAKRQAVTNPKNTLFAIKRLLGRRFEDEEVQRDIEIMPFNIVKADNGDAWVEAKGKKMAAPQVSAEVLKKMKKTAEDYLGEEVTGAVITVPAYFNDAQRQATKDAGRIAGLDVKRIINEPTAAALAYGLDKQGGERTIAVYDLGGGTFDISIIEIDEVDGEKTFEVLSTNGDTHLGGEDFDNRMINYLVGEFKKEQGIDLKSDPLAMQRVKEAAEKAKIELSSAQQTDVNLPYVTADAAGPKHMNVKVTRAKLESLVEDLVQRTLEPLKIALTDANLSITDITDVILVGGQTRMPMVQAKVTEFFGKEPRKDVNPDEAVAVGAAIQAGVLAGEVKDVLLLDVTPLSLGIETMGGVMTKLIEKNTTIPTKANQVFSTAEDNQSAVTIHVLQGERKQSSYNKSLGQFNLEGIQAGSRGTAQIDVTFDLDADGILHVSATDKATNKEQKITIQASGGLSNDDIEKMVQEAEANKEADKMFEELVTARNQADQLVHSTRKQVEELGDALPADEKAKIDTAIADVETALKGEDKAAIDNATQALMTASQALVQMAQQQAQAQHAQSSQQTNDTTGQSSTDDDVFEAEFEEVKDK.

Thr199 carries the post-translational modification Phosphothreonine; by autocatalysis. Positions 601 to 616 (MAQQQAQAQHAQSSQQ) are enriched in low complexity. The segment at 601-641 (MAQQQAQAQHAQSSQQTNDTTGQSSTDDDVFEAEFEEVKDK) is disordered. A compositionally biased stretch (acidic residues) spans 626–635 (TDDDVFEAEF).

This sequence belongs to the heat shock protein 70 family.

Functionally, acts as a chaperone. The chain is Chaperone protein DnaK 2 from Photobacterium profundum (strain SS9).